Here is a 436-residue protein sequence, read N- to C-terminus: Ribulose bisphosphate carboxylase large chain (436 aa).

Residues Asn104 and Thr154 each coordinate substrate. Lys156 functions as the Proton acceptor in the catalytic mechanism. Residue Lys158 coordinates substrate. Positions 182, 184, and 185 each coordinate Mg(2+). At Lys182 the chain carries N6-carboxylysine. The active-site Proton acceptor is His275. 3 residues coordinate substrate: Arg276, His308, and Ser360.

The protein belongs to the RuBisCO large chain family. Type I subfamily. Heterohexadecamer of 8 large chains and 8 small chains. It depends on Mg(2+) as a cofactor.

The protein resides in the plastid. The protein localises to the chloroplast. It carries out the reaction 2 (2R)-3-phosphoglycerate + 2 H(+) = D-ribulose 1,5-bisphosphate + CO2 + H2O. The catalysed reaction is D-ribulose 1,5-bisphosphate + O2 = 2-phosphoglycolate + (2R)-3-phosphoglycerate + 2 H(+). RuBisCO catalyzes two reactions: the carboxylation of D-ribulose 1,5-bisphosphate, the primary event in carbon dioxide fixation, as well as the oxidative fragmentation of the pentose substrate in the photorespiration process. Both reactions occur simultaneously and in competition at the same active site. The protein is Ribulose bisphosphate carboxylase large chain of Euglena stellata.